A 168-amino-acid chain; its full sequence is CASP-like protein UU-1 (168 aa).

Residues 1–17 (MVELESQEAVTVASTAD) are Cytoplasmic-facing. The helical transmembrane segment at 18–38 (IAVDVSLRLLAAATSLAAAVV) threads the bilayer. At 39-54 (VAANHQQRWGIRVDFT) the chain is on the extracellular side. The helical transmembrane segment at 55 to 75 (LFQVWIGFVAVNLVCTVYAAA) threads the bilayer. Residues 76-95 (TAAAAARKAMGRWWLHHADA) lie on the Cytoplasmic side of the membrane. Residues 96 to 116 (VVVNLEAAATAGAGAIGSIAM) traverse the membrane as a helical segment. Residues 117-136 (WGNEASGWYAVCRLYRRYCN) are Extracellular-facing. The chain crosses the membrane as a helical span at residues 137–157 (AGAAALALSLAAVLLLGVACA). Residues 158 to 168 (RSRYPKMPPTT) lie on the Cytoplasmic side of the membrane.

Belongs to the Casparian strip membrane proteins (CASP) family. In terms of assembly, homodimer and heterodimers.

It is found in the cell membrane. This is CASP-like protein UU-1 from Oryza sativa subsp. japonica (Rice).